The primary structure comprises 1290 residues: DNA-directed RNA polymerase subunit beta' (1290 aa).

The Zn(2+) site is built by cysteine 68, cysteine 70, cysteine 83, and cysteine 86. 3 residues coordinate Mg(2+): aspartate 530, aspartate 532, and aspartate 534. Residues cysteine 909, cysteine 985, cysteine 992, and cysteine 995 each coordinate Zn(2+).

Belongs to the RNA polymerase beta' chain family. The RNAP catalytic core consists of 2 alpha, 1 beta, 1 beta' and 1 omega subunit. When a sigma factor is associated with the core the holoenzyme is formed, which can initiate transcription. It depends on Mg(2+) as a cofactor. Zn(2+) is required as a cofactor.

The catalysed reaction is RNA(n) + a ribonucleoside 5'-triphosphate = RNA(n+1) + diphosphate. Its function is as follows. DNA-dependent RNA polymerase catalyzes the transcription of DNA into RNA using the four ribonucleoside triphosphates as substrates. In Mycoplasma pneumoniae (strain ATCC 29342 / M129 / Subtype 1) (Mycoplasmoides pneumoniae), this protein is DNA-directed RNA polymerase subunit beta'.